A 157-amino-acid polypeptide reads, in one-letter code: Peptide methionine sulfoxide reductase MsrA (157 aa).

The active site involves Cys-10.

It belongs to the MsrA Met sulfoxide reductase family.

The catalysed reaction is L-methionyl-[protein] + [thioredoxin]-disulfide + H2O = L-methionyl-(S)-S-oxide-[protein] + [thioredoxin]-dithiol. It catalyses the reaction [thioredoxin]-disulfide + L-methionine + H2O = L-methionine (S)-S-oxide + [thioredoxin]-dithiol. In terms of biological role, has an important function as a repair enzyme for proteins that have been inactivated by oxidation. Catalyzes the reversible oxidation-reduction of methionine sulfoxide in proteins to methionine. The protein is Peptide methionine sulfoxide reductase MsrA of Clostridium perfringens (strain ATCC 13124 / DSM 756 / JCM 1290 / NCIMB 6125 / NCTC 8237 / Type A).